We begin with the raw amino-acid sequence, 119 residues long: Small ribosomal subunit protein bS16 (119 aa).

It belongs to the bacterial ribosomal protein bS16 family.

This Chlamydia felis (strain Fe/C-56) (Chlamydophila felis) protein is Small ribosomal subunit protein bS16.